Here is a 265-residue protein sequence, read N- to C-terminus: MKTALDRIIDYKRDEVRALKKDRSLGELENAAAAASPVRGFGSALSAIADADQNALICEIKRKSPSAGDILPGADPVEIALDYERGGAACLSVLTDMPSFGGSLADFETIRAAVSIPMLRKDFMIDPIQIIEARAHGADCILIIMSAIDDTLAGELHDCASRLGMDVLVETHDEAEMERALRLPSPLIGVNNRDLKKMVTDLGTTERLAPMLSSDRQLIAESGIADPESIIRLRKVGSRRFLIGEWLMKQGTSRAEQVTRLKLAC.

It belongs to the TrpC family.

It catalyses the reaction 1-(2-carboxyphenylamino)-1-deoxy-D-ribulose 5-phosphate + H(+) = (1S,2R)-1-C-(indol-3-yl)glycerol 3-phosphate + CO2 + H2O. It participates in amino-acid biosynthesis; L-tryptophan biosynthesis; L-tryptophan from chorismate: step 4/5. This is Indole-3-glycerol phosphate synthase from Hyphomonas neptunium (strain ATCC 15444).